A 222-amino-acid polypeptide reads, in one-letter code: MLSMFMCNNIVDYVDGIVQDIEDEASNNVDHDYVYPLPENMVYRFDKSTNILDYLSTERDHVMMAVRYYMSKQRLDDLYRQLPTKTRSYIDIINIYCDKVSNDYNRDMNIMYDMASTKSFTVYDINNEVNTILMDNKGLGVRLATISFITELGRRCMNPVKTIKMFTLLSHTICDDCFVDYITDISPPDNTIPNTSTREYLKLIGITAIMFATYKTLKYMIG.

The protein belongs to the orthopoxvirus OPG045 family. Homodimer. Interacts with host pro-apoptotic protein BCL2L11 (via BH3 domain). Interacts with host NLRP1. Interacts with host BAK.

Its subcellular location is the host mitochondrion outer membrane. It is found in the host cytoplasm. Its function is as follows. Plays a role in evading host innate immune response by inhibiting host inflammasome activation. Interacts with and inhibits NLR-mediated interleukin-1 beta/IL1B production in infected cells. At the host mitochondria outer membrane, interacts with the BH3 domain of host BAK and prevents BAK from binding active BAX. In turn, host apoptosis is inhibited. The protein is Apoptosis regulator OPG045 (OPG045) of Homo sapiens (Human).